Here is a 530-residue protein sequence, read N- to C-terminus: Glutamate--cysteine ligase (530 aa).

The protein belongs to the glutamate--cysteine ligase type 1 family. Type 1 subfamily.

The enzyme catalyses L-cysteine + L-glutamate + ATP = gamma-L-glutamyl-L-cysteine + ADP + phosphate + H(+). Its pathway is sulfur metabolism; glutathione biosynthesis; glutathione from L-cysteine and L-glutamate: step 1/2. In Saccharophagus degradans (strain 2-40 / ATCC 43961 / DSM 17024), this protein is Glutamate--cysteine ligase.